We begin with the raw amino-acid sequence, 166 residues long: uncharacterized protein (166 aa).

117 to 124 (AAKSGGKT) lines the ATP pocket.

This is an uncharacterized protein from Mycoplasma pneumoniae (strain ATCC 29342 / M129 / Subtype 1) (Mycoplasmoides pneumoniae).